The chain runs to 156 residues: Ribosomal RNA large subunit methyltransferase H (156 aa).

Residues glycine 104 and 123 to 128 (LSAMTL) contribute to the S-adenosyl-L-methionine site.

Belongs to the RNA methyltransferase RlmH family. As to quaternary structure, homodimer.

The protein resides in the cytoplasm. It catalyses the reaction pseudouridine(1915) in 23S rRNA + S-adenosyl-L-methionine = N(3)-methylpseudouridine(1915) in 23S rRNA + S-adenosyl-L-homocysteine + H(+). Functionally, specifically methylates the pseudouridine at position 1915 (m3Psi1915) in 23S rRNA. The sequence is that of Ribosomal RNA large subunit methyltransferase H from Chromobacterium violaceum (strain ATCC 12472 / DSM 30191 / JCM 1249 / CCUG 213 / NBRC 12614 / NCIMB 9131 / NCTC 9757 / MK).